Here is a 271-residue protein sequence, read N- to C-terminus: Enolase-phosphatase E1 (271 aa).

2 residues coordinate Mg(2+): D18 and E20. Residues 144–145 and K194 contribute to the substrate site; that span reads SS. D221 lines the Mg(2+) pocket.

This sequence belongs to the HAD-like hydrolase superfamily. MasA/MtnC family. As to quaternary structure, monomer. The cofactor is Mg(2+).

The protein resides in the cytoplasm. Its subcellular location is the nucleus. The enzyme catalyses 5-methylsulfanyl-2,3-dioxopentyl phosphate + H2O = 1,2-dihydroxy-5-(methylsulfanyl)pent-1-en-3-one + phosphate. It functions in the pathway amino-acid biosynthesis; L-methionine biosynthesis via salvage pathway; L-methionine from S-methyl-5-thio-alpha-D-ribose 1-phosphate: step 3/6. Its pathway is amino-acid biosynthesis; L-methionine biosynthesis via salvage pathway; L-methionine from S-methyl-5-thio-alpha-D-ribose 1-phosphate: step 4/6. Functionally, bifunctional enzyme that catalyzes the enolization of 2,3-diketo-5-methylthiopentyl-1-phosphate (DK-MTP-1-P) into the intermediate 2-hydroxy-3-keto-5-methylthiopentenyl-1-phosphate (HK-MTPenyl-1-P), which is then dephosphorylated to form the acireductone 1,2-dihydroxy-3-keto-5-methylthiopentene (DHK-MTPene). In Candida albicans (strain WO-1) (Yeast), this protein is Enolase-phosphatase E1.